Reading from the N-terminus, the 301-residue chain is uncharacterized protein (301 aa).

This is an uncharacterized protein from Sinorhizobium fredii (strain NBRC 101917 / NGR234).